A 351-amino-acid chain; its full sequence is Adenine deaminase (351 aa).

Residues H20, H22, and H200 each contribute to the Zn(2+) site. The active-site Proton donor is E203. D281 serves as a coordination point for Zn(2+). A substrate-binding site is contributed by D282.

This sequence belongs to the metallo-dependent hydrolases superfamily. Adenosine and AMP deaminases family. Adenine deaminase type 2 subfamily. Zn(2+) is required as a cofactor.

The catalysed reaction is adenine + H2O + H(+) = hypoxanthine + NH4(+). Catalyzes the hydrolytic deamination of adenine to hypoxanthine. Plays an important role in the purine salvage pathway and in nitrogen catabolism. The polypeptide is Adenine deaminase (Cupriavidus necator (strain ATCC 17699 / DSM 428 / KCTC 22496 / NCIMB 10442 / H16 / Stanier 337) (Ralstonia eutropha)).